The sequence spans 219 residues: Protein ERP1 (219 aa).

The N-terminal stretch at 1–22 (MLLTSLLQVFACCLVLPAQVTA) is a signal peptide. The Lumenal segment spans residues 23–186 (FYYYTSGAER…RDASEAVNSR (164 aa)). In terms of domain architecture, GOLD spans 32-131 (RKCFHKELSK…KTKIDVEFQV (100 aa)). A helical transmembrane segment spans residues 187–207 (AMWWIVIQLIVLAVTCGWQMK). The Cytoplasmic portion of the chain corresponds to 208–219 (HLGKFFVKQKIL).

The protein belongs to the EMP24/GP25L family. As to quaternary structure, associates with EMP24, ERV25 and ERP2.

Its subcellular location is the endoplasmic reticulum membrane. Involved in vesicular protein trafficking. This chain is Protein ERP1 (ERP1), found in Saccharomyces cerevisiae (strain ATCC 204508 / S288c) (Baker's yeast).